We begin with the raw amino-acid sequence, 287 residues long: Putative DNA-3-methyladenine glycosylase YfjP (287 aa).

The active-site Proton acceptor is the aspartate 242.

This sequence belongs to the alkylbase DNA glycosidase AlkA family.

The enzyme catalyses Hydrolysis of alkylated DNA, releasing 3-methyladenine, 3-methylguanine, 7-methylguanine and 7-methyladenine.. Functionally, hydrolysis of the deoxyribose N-glycosidic bond to excise 3-methyladenine, 3-methylguanine, 7-methylguanine, O2-methylthymine, and O2-methylcytosine from the damaged DNA polymer formed by alkylation lesions. The protein is Putative DNA-3-methyladenine glycosylase YfjP (yfjP) of Bacillus subtilis (strain 168).